The primary structure comprises 132 residues: ATP synthase epsilon chain (132 aa).

Belongs to the ATPase epsilon chain family. In terms of assembly, F-type ATPases have 2 components, CF(1) - the catalytic core - and CF(0) - the membrane proton channel. CF(1) has five subunits: alpha(3), beta(3), gamma(1), delta(1), epsilon(1). CF(0) has three main subunits: a, b and c.

It localises to the cell inner membrane. In terms of biological role, produces ATP from ADP in the presence of a proton gradient across the membrane. The polypeptide is ATP synthase epsilon chain (Anaeromyxobacter dehalogenans (strain 2CP-C)).